A 400-amino-acid polypeptide reads, in one-letter code: Formate-dependent phosphoribosylglycinamide formyltransferase (400 aa).

N(1)-(5-phospho-beta-D-ribosyl)glycinamide is bound by residues Glu-22 to Leu-23 and Glu-82. Residues Arg-115, Lys-156, Ser-161–Gln-166, Glu-196–Ile-199, and Glu-204 each bind ATP. Positions Arg-120–Leu-309 constitute an ATP-grasp domain. Residues Glu-268 and Glu-280 each coordinate Mg(2+). N(1)-(5-phospho-beta-D-ribosyl)glycinamide is bound by residues Asp-287, Lys-361, and Arg-368–Arg-369.

Belongs to the PurK/PurT family. In terms of assembly, homodimer.

It catalyses the reaction N(1)-(5-phospho-beta-D-ribosyl)glycinamide + formate + ATP = N(2)-formyl-N(1)-(5-phospho-beta-D-ribosyl)glycinamide + ADP + phosphate + H(+). Its pathway is purine metabolism; IMP biosynthesis via de novo pathway; N(2)-formyl-N(1)-(5-phospho-D-ribosyl)glycinamide from N(1)-(5-phospho-D-ribosyl)glycinamide (formate route): step 1/1. In terms of biological role, involved in the de novo purine biosynthesis. Catalyzes the transfer of formate to 5-phospho-ribosyl-glycinamide (GAR), producing 5-phospho-ribosyl-N-formylglycinamide (FGAR). Formate is provided by PurU via hydrolysis of 10-formyl-tetrahydrofolate. The chain is Formate-dependent phosphoribosylglycinamide formyltransferase from Xanthomonas oryzae pv. oryzae (strain KACC10331 / KXO85).